Reading from the N-terminus, the 874-residue chain is Ectonucleotide pyrophosphatase/phosphodiesterase family member 3 (874 aa).

Topologically, residues 1 to 11 are cytoplasmic; the sequence is MQSTLNLSTEE. A helical; Signal-anchor for type II membrane protein membrane pass occupies residues 12-30; that stretch reads PVKRNTVKKYKIICIVLLI. Residues 31–874 are Extracellular-facing; the sequence is LLVAVSLALG…TYLPVFETVI (844 aa). SMB domains follow at residues 50-93 and 94-138; these read EQGS…VQST and QIWT…GETS. 10 cysteine pairs are disulfide-bonded: Cys54/Cys71, Cys58/Cys89, Cys69/Cys82, Cys75/Cys81, Cys98/Cys115, Cys103/Cys133, Cys113/Cys126, Cys119/Cys125, Cys144/Cys190, and Cys152/Cys364. The Cell attachment site signature appears at 78–80; that stretch reads RGD. The phosphodiesterase stretch occupies residues 160 to 544; sequence PVILFSMDGF…HGSLNHLLKV (385 aa). Asp167 is a binding site for Zn(2+). Lys204 is an ATP binding site. Thr205 contacts Zn(2+). Catalysis depends on Thr205, which acts as the Nucleophile. Residue Asn226 coordinates ATP. A glycan (N-linked (GlcNAc...) asparagine) is linked at Asn236. Residue Asp275 coordinates ATP. Asn279 carries N-linked (GlcNAc...) asparagine glycosylation. Tyr289 is a binding site for ATP. Asn290 carries N-linked (GlcNAc...) asparagine glycosylation. 4 residues coordinate Zn(2+): Asp325, His329, Asp372, and His373. Disulfide bonds link Cys380-Cys477, Cys428-Cys817, Cys561-Cys622, Cys574-Cys678, Cys576-Cys663, and Cys786-Cys796. An N-linked (GlcNAc...) asparagine glycan is attached at Asn425. His482 contributes to the Zn(2+) binding site. Asn532 carries N-linked (GlcNAc...) asparagine glycosylation. The tract at residues 581–874 is nuclease; it reads TNSDLERVNQ…TYLPVFETVI (294 aa). 3 N-linked (GlcNAc...) asparagine glycosylation sites follow: Asn677, Asn686, and Asn698. Positions 751, 755, 757, and 759 each coordinate Ca(2+). 3 N-linked (GlcNAc...) asparagine glycosylation sites follow: Asn770, Asn788, and Asn820.

The protein belongs to the nucleotide pyrophosphatase/phosphodiesterase family. In terms of assembly, monomer and homodimer. The cofactor is Zn(2+). N-glycosylated. N-glycosylation is necessary for normal transport to the cell membrane, but is not the apical targeting signal.

The protein resides in the cell membrane. It localises to the apical cell membrane. It is found in the secreted. It carries out the reaction a ribonucleoside 5'-triphosphate + H2O = a ribonucleoside 5'-phosphate + diphosphate + H(+). The catalysed reaction is ATP + H2O = AMP + diphosphate + H(+). The enzyme catalyses CTP + H2O = CMP + diphosphate + H(+). It catalyses the reaction GTP + H2O = GMP + diphosphate + H(+). It carries out the reaction UTP + H2O = UMP + diphosphate + H(+). The catalysed reaction is UDP-N-acetyl-alpha-D-glucosamine + H2O = N-acetyl-alpha-D-glucosamine 1-phosphate + UMP + 2 H(+). The enzyme catalyses P(1),P(3)-bis(5'-adenosyl) triphosphate + H2O = AMP + ADP + 2 H(+). It catalyses the reaction P(1),P(4)-bis(5'-adenosyl) tetraphosphate + H2O = AMP + ATP + 2 H(+). It carries out the reaction P(1),P(5)-bis(5'-adenosyl) pentaphosphate + H2O = adenosine 5'-tetraphosphate + AMP + 2 H(+). The catalysed reaction is P(1),P(4)-bis(5'-guanosyl) tetraphosphate + H2O = GMP + GTP + 2 H(+). The enzyme catalyses Hydrolytically removes 5'-nucleotides successively from the 3'-hydroxy termini of 3'-hydroxy-terminated oligonucleotides.. Hydrolase that metabolizes extracellular nucleotides, including ATP, GTP, UTP and CTP. Limits mast cells and basophils response during inflammation and during the chronic phases of allergic responses by eliminating extracellular ATP, a signaling molecule activating these cells in an autocrine manner. Metabolizes extracellular ATP in the lumen of the small intestine, and thereby prevents ATP-induced apoptosis of intestinal plasmacytoid dendritic cells. Has a broad specificity and can also hydrolyze UDP-GlcNAc into UMP and GlcNAc-1-phosphate and potentially several other intracellular nucleotide sugars, including UDP-GalNAc, CMP-NeuAc, GDP-Fuc, and UDP-GlcA. Thereby, could modulate glycan biosynthesis and protein glycosylation. Can hydrolyze extracellular dinucleoside polyphosphates, including the vasoactive adenosine polyphosphates as well. In addition, displays an alkaline phosphodiesterase activity in vitro. This is Ectonucleotide pyrophosphatase/phosphodiesterase family member 3 (ENPP3) from Bos taurus (Bovine).